The sequence spans 220 residues: V-set and transmembrane domain-containing protein 2-like protein (220 aa).

The first 24 residues, 1-24 (MGAPLAAALGALHYLALFLQLGGA), serve as a signal peptide directing secretion. Positions 41–158 (ALFTETPHDM…DGGRGVPRVL (118 aa)) constitute an Ig-like domain. An intrachain disulfide couples Cys-62 to Cys-142. Over residues 165–180 (PAPPRAPRPRGQPPGE) the composition is skewed to pro residues. The tract at residues 165–220 (PAPPRAPRPRGQPPGEEPGRGPTLLFLIILPGTGSGTPREAEPHQPHAGGCPARQS) is disordered.

The polypeptide is V-set and transmembrane domain-containing protein 2-like protein (Vstm2l) (Mus musculus (Mouse)).